A 102-amino-acid chain; its full sequence is Caroteno-chlorophyll a-c-binding protein (102 aa).

Chlorophyll a is bound by residues Glu-36 and His-39. A helical membrane pass occupies residues 78 to 98 (VLGLIKIVPAGLWGIMIFYAA).

It belongs to the light-harvesting chlorophyll a/b-binding (LHC) protein family. The LHC complex consists of chlorophyll a-b binding proteins. Binds at least 14 chlorophylls (8 Chl-a and 6 Chl-b) and carotenoids such as lutein and neoxanthin. serves as cofactor. Post-translationally, photoregulated by reversible phosphorylation of its threonine residues.

It localises to the plastid. The protein resides in the chloroplast thylakoid membrane. Functionally, the light-harvesting complex (LHC) functions as a light receptor, it captures and delivers excitation energy to photosystems with which it is closely associated. The protein is Caroteno-chlorophyll a-c-binding protein of Amphidinium carterae (Dinoflagellate).